The sequence spans 89 residues: Small ribosomal subunit protein uS15 (89 aa).

It belongs to the universal ribosomal protein uS15 family. In terms of assembly, part of the 30S ribosomal subunit. Forms a bridge to the 50S subunit in the 70S ribosome, contacting the 23S rRNA.

Its function is as follows. One of the primary rRNA binding proteins, it binds directly to 16S rRNA where it helps nucleate assembly of the platform of the 30S subunit by binding and bridging several RNA helices of the 16S rRNA. In terms of biological role, forms an intersubunit bridge (bridge B4) with the 23S rRNA of the 50S subunit in the ribosome. In Desulfotalea psychrophila (strain LSv54 / DSM 12343), this protein is Small ribosomal subunit protein uS15.